We begin with the raw amino-acid sequence, 264 residues long: Acyl-[acyl-carrier-protein]--UDP-N-acetylglucosamine O-acyltransferase (264 aa).

Belongs to the transferase hexapeptide repeat family. LpxA subfamily. In terms of assembly, homotrimer.

It is found in the cytoplasm. It carries out the reaction a (3R)-hydroxyacyl-[ACP] + UDP-N-acetyl-alpha-D-glucosamine = a UDP-3-O-[(3R)-3-hydroxyacyl]-N-acetyl-alpha-D-glucosamine + holo-[ACP]. It participates in glycolipid biosynthesis; lipid IV(A) biosynthesis; lipid IV(A) from (3R)-3-hydroxytetradecanoyl-[acyl-carrier-protein] and UDP-N-acetyl-alpha-D-glucosamine: step 1/6. Its function is as follows. Involved in the biosynthesis of lipid A, a phosphorylated glycolipid that anchors the lipopolysaccharide to the outer membrane of the cell. The polypeptide is Acyl-[acyl-carrier-protein]--UDP-N-acetylglucosamine O-acyltransferase (Rickettsia canadensis (strain McKiel)).